A 208-amino-acid polypeptide reads, in one-letter code: UPF0637 protein BCQ_3749 (208 aa).

It belongs to the UPF0637 family.

The sequence is that of UPF0637 protein BCQ_3749 from Bacillus cereus (strain Q1).